We begin with the raw amino-acid sequence, 300 residues long: Protoheme IX farnesyltransferase 1 (300 aa).

8 helical membrane passes run 26–46 (VVVL…RAGV), 48–68 (WTVL…AAAV), 97–117 (AALA…LTFT), 120–140 (LTAW…TGFL), 148–168 (IVIG…AATG), 174–194 (PLLL…ALAI), 226–246 (FALL…VLYL), and 280–300 (IYYL…LLNL).

It belongs to the UbiA prenyltransferase family. Protoheme IX farnesyltransferase subfamily.

Its subcellular location is the cell inner membrane. The enzyme catalyses heme b + (2E,6E)-farnesyl diphosphate + H2O = Fe(II)-heme o + diphosphate. Its pathway is porphyrin-containing compound metabolism; heme O biosynthesis; heme O from protoheme: step 1/1. Converts heme B (protoheme IX) to heme O by substitution of the vinyl group on carbon 2 of heme B porphyrin ring with a hydroxyethyl farnesyl side group. The chain is Protoheme IX farnesyltransferase 1 from Pseudomonas fluorescens (strain ATCC BAA-477 / NRRL B-23932 / Pf-5).